A 348-amino-acid polypeptide reads, in one-letter code: NADH-quinone oxidoreductase subunit H (348 aa).

Helical transmembrane passes span Leu-10–Val-30, Gly-82–Ile-102, Val-115–Gly-135, Ile-161–Val-181, Phe-199–Leu-219, Leu-251–Phe-271, Ile-287–Val-307, and Leu-322–Leu-342.

The protein belongs to the complex I subunit 1 family. NDH-1 is composed of 14 different subunits. Subunits NuoA, H, J, K, L, M, N constitute the membrane sector of the complex.

Its subcellular location is the cell inner membrane. It carries out the reaction a quinone + NADH + 5 H(+)(in) = a quinol + NAD(+) + 4 H(+)(out). In terms of biological role, NDH-1 shuttles electrons from NADH, via FMN and iron-sulfur (Fe-S) centers, to quinones in the respiratory chain. The immediate electron acceptor for the enzyme in this species is believed to be ubiquinone. Couples the redox reaction to proton translocation (for every two electrons transferred, four hydrogen ions are translocated across the cytoplasmic membrane), and thus conserves the redox energy in a proton gradient. This subunit may bind ubiquinone. The polypeptide is NADH-quinone oxidoreductase subunit H (Bartonella tribocorum (strain CIP 105476 / IBS 506)).